The sequence spans 235 residues: RING-H2 finger protein ATL17 (235 aa).

Residues 1–21 form a helical membrane-spanning segment; the sequence is MLTTTILILLIVILMVSLHLY. The RING-type; atypical zinc-finger motif lies at 76–118; sequence CSVCLSEFKDNESGRVMPNCKHTFHVHCIDMWFHSHSSCPLCR. A disordered region spans residues 143 to 167; that stretch reads VYGDTNHHEGTETTGDSVPEDSQRK.

The protein belongs to the RING-type zinc finger family. ATL subfamily.

Its subcellular location is the membrane. The catalysed reaction is S-ubiquitinyl-[E2 ubiquitin-conjugating enzyme]-L-cysteine + [acceptor protein]-L-lysine = [E2 ubiquitin-conjugating enzyme]-L-cysteine + N(6)-ubiquitinyl-[acceptor protein]-L-lysine.. The protein operates within protein modification; protein ubiquitination. In terms of biological role, may be involved in the early steps of the plant defense signaling pathway. The protein is RING-H2 finger protein ATL17 (ATL17) of Arabidopsis thaliana (Mouse-ear cress).